Consider the following 400-residue polypeptide: Large envelope protein (400 aa).

Methionine 1 bears the N-acetylmethionine mark. Disordered stretches follow at residues 1–42 (MGGY…NNPD) and 84–118 (ILTT…SHPQ). Glycine 2 is lipidated: N-myristoyl glycine; by host. Residues 2-119 (GGYSSKPRKG…PPLRDSHPQA (118 aa)) form a pre-S1 region. The tract at residues 2–174 (GGYSSKPRKG…FSRTGDPVPK (173 aa)) is pre-S. The Virion surface; in external conformation portion of the chain corresponds to 2–181 (GGYSSKPRKG…VPKMENTTSG (180 aa)). Over 2-253 (GGYSSKPRKG…PGYRWMCLRR (252 aa)) the chain is Intravirion; in internal conformation. Residue tyrosine 4 is glycosylated (N-linked (GlcNAc...) asparagine). Residues 120-174 (MQWNSTTFHQALLDPRVRGLYFPAGGSSSGTANPVPTTASPISSIFSRTGDPVPK) form a pre-S2 region. A helical membrane pass occupies residues 182-202 (FLGPLLVLQAGFFLLTRILTI). Topologically, residues 203 to 253 (PQSLDSWWTSLNFLGGAPACPGQNSQSPTSNHSPTSCPPICPGYRWMCLRR) are intravirion; in external conformation. The chain crosses the membrane as a helical span at residues 254–274 (FIIFLFILLLCLIFLLVLLDY). The Virion surface portion of the chain corresponds to 275 to 348 (QGMLPVCPLI…WASVRFSWLS (74 aa)). Residue asparagine 320 is glycosylated (N-linked (GlcNAc...) asparagine; by host). A helical membrane pass occupies residues 349–369 (LLAPFVQWFVGLSPTVWLSVI). The Intravirion segment spans residues 370–375 (WMMWYW). The helical transmembrane segment at 376 to 398 (GPSLYNILSPFLPLLPIFFCLWV) threads the bilayer. At 399–400 (YI) the chain is on the virion surface side.

The protein belongs to the orthohepadnavirus major surface antigen family. In terms of assembly, in its internal form (Li-HBsAg), interacts with the capsid protein and with the isoform S. Interacts with host chaperone CANX. Associates with host chaperone CANX through its pre-S2 N glycan; this association may be essential for isoform M proper secretion. As to quaternary structure, interacts with isoform L. Interacts with the antigens of satellite virus HDV (HDVAgs); this interaction is required for encapsidation of HDV genomic RNA. Isoform M is N-terminally acetylated by host at a ratio of 90%, and N-glycosylated by host at the pre-S2 region. In terms of processing, myristoylated.

The protein resides in the virion membrane. In terms of biological role, the large envelope protein exists in two topological conformations, one which is termed 'external' or Le-HBsAg and the other 'internal' or Li-HBsAg. In its external conformation the protein attaches the virus to cell receptors and thereby initiating infection. This interaction determines the species specificity and liver tropism. This attachment induces virion internalization predominantly through caveolin-mediated endocytosis. The large envelope protein also assures fusion between virion membrane and endosomal membrane. In its internal conformation the protein plays a role in virion morphogenesis and mediates the contact with the nucleocapsid like a matrix protein. The middle envelope protein plays an important role in the budding of the virion. It is involved in the induction of budding in a nucleocapsid independent way. In this process the majority of envelope proteins bud to form subviral lipoprotein particles of 22 nm of diameter that do not contain a nucleocapsid. The polypeptide is Large envelope protein (Homo sapiens (Human)).